Consider the following 379-residue polypeptide: Oxidized polyvinyl alcohol hydrolase (379 aa).

The signal sequence occupies residues 1-23; that stretch reads MNQSLGVLRLTRGVIALALASVA. Residues serine 203 and serine 309 each act as charge relay system in the active site.

This sequence belongs to the peptidase S9A family. Monomer.

It catalyses the reaction nonane-4,6-dione + H2O = pentan-2-one + butanoate + H(+). Catalyzes the hydrolysis of 4,6-nonanedione, a beta-diketone compound. Also mediates hydrolysis of oxidized polyvinyl alcohol (PVA) in the second step in the degradation of polyvinyl alcohol. Not active toward the monoketone structure. This chain is Oxidized polyvinyl alcohol hydrolase (pvaB), found in Pseudomonas sp.